Reading from the N-terminus, the 156-residue chain is Nucleoredoxin-like protein 2 (156 aa).

Positions 9–147 constitute a Thioredoxin domain; it reads HLVTCKGATV…LACFQDWVEA (139 aa).

The protein belongs to the nucleoredoxin family.

May be involved in the maintenance of both the function and the viability of sensory neurons, including photoreceptors and olfactory neurons. The polypeptide is Nucleoredoxin-like protein 2 (NXNL2) (Homo sapiens (Human)).